The sequence spans 119 residues: Cytochrome c55X (119 aa).

The N-terminal stretch at 1-20 (MNAPPDFRRAASHALWLALA) is a signal peptide. 3 residues coordinate heme c: C51, C54, and H55.

In terms of processing, binds 1 heme c group covalently per subunit.

The protein resides in the periplasm. In terms of biological role, monoheme c-type cytochrome. This is Cytochrome c55X (nirC) from Pseudomonas aeruginosa (strain ATCC 15692 / DSM 22644 / CIP 104116 / JCM 14847 / LMG 12228 / 1C / PRS 101 / PAO1).